Reading from the N-terminus, the 308-residue chain is MKVIFAGTPDFAAAALKAVAAAGFEIPLVLTQPDRPKGRGMQLTAPPVKQAALELGLRVAQPEKLRNNAEALQMLKEVEADVMVVAAYGLILPQEVLDTPKHGCLNIHASLLPRWRGAAPIQRAIEAGDAETGVCIMQMDIGLDTGDVVSEHRYAIQPTDTANEVHDALMEIGAAAVVADLQQLQSKGRLNAVKQPEEGVTYAQKLSKEEARIDWSESAAVIERKIRAFNPVPAAWVEYQGKPMKIRRAEVVAQQGAAGEVLSCSADGLVVACGENALKITELQPAGGRRMNIAAFAAGRHIEAGTKL.

Position 110 to 113 (110 to 113) interacts with (6S)-5,6,7,8-tetrahydrofolate; sequence SLLP.

The protein belongs to the Fmt family.

The catalysed reaction is L-methionyl-tRNA(fMet) + (6R)-10-formyltetrahydrofolate = N-formyl-L-methionyl-tRNA(fMet) + (6S)-5,6,7,8-tetrahydrofolate + H(+). Attaches a formyl group to the free amino group of methionyl-tRNA(fMet). The formyl group appears to play a dual role in the initiator identity of N-formylmethionyl-tRNA by promoting its recognition by IF2 and preventing the misappropriation of this tRNA by the elongation apparatus. The polypeptide is Methionyl-tRNA formyltransferase (Neisseria meningitidis serogroup C / serotype 2a (strain ATCC 700532 / DSM 15464 / FAM18)).